Here is a 391-residue protein sequence, read N- to C-terminus: Probable tRNA sulfurtransferase (391 aa).

The region spanning 60–167 is the THUMP domain; that stretch reads DEIIDHIKKV…KDNCYVYTDR (108 aa). ATP-binding positions include 185–186, 210–211, Arg267, Gly289, and Gln298; these read LL and HF.

This sequence belongs to the ThiI family.

The protein resides in the cytoplasm. It carries out the reaction [ThiI sulfur-carrier protein]-S-sulfanyl-L-cysteine + a uridine in tRNA + 2 reduced [2Fe-2S]-[ferredoxin] + ATP + H(+) = [ThiI sulfur-carrier protein]-L-cysteine + a 4-thiouridine in tRNA + 2 oxidized [2Fe-2S]-[ferredoxin] + AMP + diphosphate. It catalyses the reaction [ThiS sulfur-carrier protein]-C-terminal Gly-Gly-AMP + S-sulfanyl-L-cysteinyl-[cysteine desulfurase] + AH2 = [ThiS sulfur-carrier protein]-C-terminal-Gly-aminoethanethioate + L-cysteinyl-[cysteine desulfurase] + A + AMP + 2 H(+). The protein operates within cofactor biosynthesis; thiamine diphosphate biosynthesis. Functionally, catalyzes the ATP-dependent transfer of a sulfur to tRNA to produce 4-thiouridine in position 8 of tRNAs, which functions as a near-UV photosensor. Also catalyzes the transfer of sulfur to the sulfur carrier protein ThiS, forming ThiS-thiocarboxylate. This is a step in the synthesis of thiazole, in the thiamine biosynthesis pathway. The sulfur is donated as persulfide by IscS. This chain is Probable tRNA sulfurtransferase, found in Finegoldia magna (strain ATCC 29328 / DSM 20472 / WAL 2508) (Peptostreptococcus magnus).